A 647-amino-acid chain; its full sequence is MFLEKINQKTGEREWVVAEEDYDMAQELARSRFGDMILDFDRNDKFLAGLKTTIAEKKHENTDGKVHVLDIGTGTGLLSLMAAREGADKVTALEVFKPMGDCARHITSNSPWSDKITVISERSTDVSQIGGSRADIIVAEVFDTELIGEGALRTFKEALERLAKPGCRVVPSTGNVYIVPVESHLLKMFNDIPRLNGEKDEEPLGRCSGTAAVFDVQLSEMKTHEFRELSEPIVAFKFDFEHEEKIIFDESFVREAVAHSSGTIDALLMWWDIDMDRNGTTFIDMGPKWKNKNNYAWRDHWMQAVYYLPEKKKVEMNQTFEIVCNHDEFSLWFSNVGKDKSRSYCVCGLHSMLSRQTVYHVNEMFENQKFKDEVDKLSKGLHVATVGEGSFLGLLAAKTAKRVTIIDGNERFRDIFFKYIHYYKLTNVEIIEKVTSLTDSPDIVLAEPFYMSAMNPWNHLRFLYDVEVLKMMHGDELRVEPHMGVLKAIPEKFEDLQNIASDVGTVNGFDLSFFDEISTKARTATDAIVDEQSLWEYAGIVKGDAVEILRFPIDGRVSSQKCVVNIDNMSSSNAIPMWMEWEFGGINLSTGLLSISSAGVPEWNKGYKQGVYFPITALRNDKSLCLHALFDKSTGDINFQFGKSEDS.

2 consecutive SAM-dependent MTase PRMT-type domains span residues 12-332 (EREW…FSLW) and 337-647 (GKDK…SEDS). Residues glutamate 140 and glutamate 149 contribute to the active site.

The protein belongs to the class I-like SAM-binding methyltransferase superfamily. Protein arginine N-methyltransferase family. PRMT7 subfamily.

Arginine methyltransferase that can both catalyze the formation of omega-N monomethylarginine (MMA) and symmetrical dimethylarginine (sDMA). This is Protein arginine N-methyltransferase 7 (prmt-7) from Caenorhabditis elegans.